The chain runs to 107 residues: uncharacterized protein (107 aa).

4 consecutive transmembrane segments (helical) span residues 9–28 (FLVF…LIME), 33–50 (SYII…SLNI), 55–72 (LAIA…AIHV), and 77–99 (YRVI…YLKG).

It localises to the cell membrane. This is an uncharacterized protein from Archaeoglobus fulgidus (strain ATCC 49558 / DSM 4304 / JCM 9628 / NBRC 100126 / VC-16).